A 133-amino-acid chain; its full sequence is Large ribosomal subunit protein uL14 (133 aa).

The protein belongs to the universal ribosomal protein uL14 family. In terms of assembly, part of the 50S ribosomal subunit. Forms a cluster with proteins L3 and L24e, part of which may contact the 16S rRNA in 2 intersubunit bridges.

Binds to 23S rRNA. Forms part of two intersubunit bridges in the 70S ribosome. The polypeptide is Large ribosomal subunit protein uL14 (Nanoarchaeum equitans (strain Kin4-M)).